Reading from the N-terminus, the 125-residue chain is Small ribosomal subunit protein uS12 (125 aa).

Asp-89 carries the 3-methylthioaspartic acid modification. Positions 106 to 125 (GVKDRKQSRSKYGAKRPKKA) are disordered. A compositionally biased stretch (basic residues) spans 113–125 (SRSKYGAKRPKKA).

This sequence belongs to the universal ribosomal protein uS12 family. Part of the 30S ribosomal subunit. Contacts proteins S8 and S17. May interact with IF1 in the 30S initiation complex.

Its function is as follows. With S4 and S5 plays an important role in translational accuracy. In terms of biological role, interacts with and stabilizes bases of the 16S rRNA that are involved in tRNA selection in the A site and with the mRNA backbone. Located at the interface of the 30S and 50S subunits, it traverses the body of the 30S subunit contacting proteins on the other side and probably holding the rRNA structure together. The combined cluster of proteins S8, S12 and S17 appears to hold together the shoulder and platform of the 30S subunit. The polypeptide is Small ribosomal subunit protein uS12 (Variovorax paradoxus (strain S110)).